Here is a 447-residue protein sequence, read N- to C-terminus: Argininosuccinate synthase (447 aa).

ATP-binding positions include A20 to S28 and A46. Residue Y102 participates in L-citrulline binding. Residues G132 and T134 each coordinate ATP. Residues T134, N138, and D139 each contribute to the L-aspartate site. N138 contributes to the L-citrulline binding site. D139 lines the ATP pocket. Positions 142 and 195 each coordinate L-citrulline. D197 provides a ligand contact to ATP. L-citrulline is bound by residues T204, E206, and E283.

Belongs to the argininosuccinate synthase family. Type 2 subfamily. Homotetramer.

It localises to the cytoplasm. It catalyses the reaction L-citrulline + L-aspartate + ATP = 2-(N(omega)-L-arginino)succinate + AMP + diphosphate + H(+). It functions in the pathway amino-acid biosynthesis; L-arginine biosynthesis; L-arginine from L-ornithine and carbamoyl phosphate: step 2/3. This chain is Argininosuccinate synthase (argG), found in Neisseria meningitidis serogroup A / serotype 4A (strain DSM 15465 / Z2491).